A 210-amino-acid polypeptide reads, in one-letter code: MSGLFITLEGPEGAGKSTNREYLAARLREQGVDVVMTREPGGTPLAERIRELLLAPSEEAMAVDTELLLMFAARAQHLAQVIRPALARGAVVLCDRFTDATYAYQGGGRGLSVERIAILESFVQGELRPDLTLVFDLPVEVGLARAAARGRLDRFEQEGQAFFEAVRQAYLQRAGQQPQRYSLLDAAQPLAAVQRAIDALLPGILERCRG.

10–17 (GPEGAGKS) is an ATP binding site.

Belongs to the thymidylate kinase family.

It catalyses the reaction dTMP + ATP = dTDP + ADP. Phosphorylation of dTMP to form dTDP in both de novo and salvage pathways of dTTP synthesis. The sequence is that of Thymidylate kinase from Pseudomonas entomophila (strain L48).